The chain runs to 415 residues: Adipocyte plasma membrane-associated protein (415 aa).

Residues 1–39 (MNEPEGLRFRRLNRPHIITDETHEPQYKATSTYSGKVFR) lie on the Cytoplasmic side of the membrane. A helical transmembrane segment spans residues 40 to 60 (VTLLTMVAFLLLPLLVVVFVL). Topologically, residues 61-412 (ESPIQPEVFS…RSPYLCKLDL (352 aa)) are extracellular. An N-linked (GlcNAc...) asparagine glycan is attached at N159.

Belongs to the strictosidine synthase family.

It localises to the membrane. This Danio rerio (Zebrafish) protein is Adipocyte plasma membrane-associated protein (apmap).